Reading from the N-terminus, the 346-residue chain is NADPH dehydrogenase (346 aa).

23–26 (SPMC) serves as a coordination point for FMN. A substrate-binding site is contributed by tyrosine 28. FMN contacts are provided by alanine 60 and glutamine 102. 164–167 (HGAH) contacts substrate. FMN contacts are provided by residues arginine 215 and 307-308 (GR).

This sequence belongs to the NADH:flavin oxidoreductase/NADH oxidase family. NamA subfamily. Homotetramer. The cofactor is FMN.

The catalysed reaction is A + NADPH + H(+) = AH2 + NADP(+). Its function is as follows. Catalyzes the reduction of the double bond of an array of alpha,beta-unsaturated aldehydes and ketones. It also reduces the nitro group of nitroester and nitroaromatic compounds. It could have a role in detoxification processes. The sequence is that of NADPH dehydrogenase from Bacillus cytotoxicus (strain DSM 22905 / CIP 110041 / 391-98 / NVH 391-98).